Here is a 387-residue protein sequence, read N- to C-terminus: Beta-citrylglutamate synthase B (387 aa).

The ATP-grasp domain occupies 119-304 (FQELAGHGVP…VAGIIADYAA (186 aa)). ATP is bound by residues lysine 158, 193–203 (QKYIKESHGRD), and arginine 219. Mg(2+)-binding residues include aspartate 264, glutamate 277, and asparagine 279. Residues aspartate 264, glutamate 277, and asparagine 279 each contribute to the Mn(2+) site. The segment at 325-361 (ASETSEPELGPPASAAVDNMSASSSSVDSDPESTTER) is disordered. Positions 337 to 352 (ASAAVDNMSASSSSVD) are enriched in low complexity.

The protein belongs to the RimK family. Mg(2+) is required as a cofactor. Requires Mn(2+) as cofactor. In terms of tissue distribution, strongly expressed in brain and testis. Expressed in eyes, thymus, lung, kidney, skeletal muscle, spleen, skin and heart. Expressed in neurons of the neocortex, the gray matter and Purkinje cells.

The protein resides in the cytoplasm. The enzyme catalyses citrate + L-glutamate + ATP = beta-citrylglutamate + ADP + phosphate + H(+). It catalyses the reaction N-acetyl-L-aspartate + L-glutamate + ATP = N-acetyl-L-aspartyl-L-glutamate + ADP + phosphate + H(+). Its function is as follows. Catalyzes the synthesis of beta-citryl-L-glutamate and N-acetyl-L-aspartyl-L-glutamate. Beta-citryl-L-glutamate is synthesized more efficiently than N-acetyl-L-aspartyl-L-glutamate. This is Beta-citrylglutamate synthase B (Rimklb) from Mus musculus (Mouse).